The chain runs to 453 residues: Glutamyl-tRNA(Gln) amidotransferase subunit A (453 aa).

Active-site charge relay system residues include lysine 56 and serine 131. Serine 155 functions as the Acyl-ester intermediate in the catalytic mechanism.

This sequence belongs to the amidase family. GatA subfamily. In terms of assembly, heterotrimer of A, B and C subunits.

The enzyme catalyses L-glutamyl-tRNA(Gln) + L-glutamine + ATP + H2O = L-glutaminyl-tRNA(Gln) + L-glutamate + ADP + phosphate + H(+). In terms of biological role, allows the formation of correctly charged Gln-tRNA(Gln) through the transamidation of misacylated Glu-tRNA(Gln) in organisms which lack glutaminyl-tRNA synthetase. The reaction takes place in the presence of glutamine and ATP through an activated gamma-phospho-Glu-tRNA(Gln). The polypeptide is Glutamyl-tRNA(Gln) amidotransferase subunit A (Campylobacter jejuni (strain RM1221)).